A 731-amino-acid chain; its full sequence is Cucumisin (731 aa).

The first 22 residues, 1–22 (MSSSLIFKLFFFSLFFSNRLAS), serve as a signal peptide directing secretion. Positions 23 to 110 (RLDSDDDGKN…VFLNEMNELH (88 aa)) are cleaved as a propeptide — activation peptide. Positions 34-110 (YIVYMGRKLE…VFLNEMNELH (77 aa)) constitute an Inhibitor I9 domain. A Peptidase S8 domain is found at 114-584 (SWDFLGFPLT…SGHVNPLKAV (471 aa)). Aspartate 140 functions as the Charge relay system in the catalytic mechanism. A disulfide bridge links cysteine 166 with cysteine 174. Histidine 204 functions as the Charge relay system in the catalytic mechanism. 2 disulfides stabilise this stretch: cysteine 245–cysteine 250 and cysteine 380–cysteine 397. Asparagine 466 is a glycosylation site (N-linked (GlcNAc...) asparagine). The active-site Charge relay system is the serine 525. Positions 616-731 (GDYSACTSGN…RSPITITSLV (116 aa)) are excised as a propeptide. N-linked (GlcNAc...) asparagine glycosylation is present at asparagine 652.

It belongs to the peptidase S8 family. In terms of assembly, monomer and dimer. Post-translationally, the C-terminal propeptide is autocleaved. As to expression, specifically expressed in fruits. Expressed in sarcocarp (at protein level).

It is found in the secreted. It catalyses the reaction Hydrolysis of proteins with broad specificity.. In Cucumis melo (Muskmelon), this protein is Cucumisin.